The primary structure comprises 204 residues: DNA-directed RNA polymerase III subunit RPC8 (204 aa).

Residues 158 to 178 (VDTSPTGPSSAEAASSSEELP) are disordered. Positions 166-175 (SSAEAASSSE) are enriched in low complexity.

It belongs to the eukaryotic RPB7/RPC8 RNA polymerase subunit family. Component of the RNA polymerase III complex consisting of 17 subunits: a ten-subunit horseshoe-shaped catalytic core composed of POLR3A/RPC1, POLR3B/RPC2, POLR1C/RPAC1, POLR1D/RPAC2, POLR3K/RPC10, POLR2E/RPABC1, POLR2F/RPABC2, POLR2H/RPABC3, POLR2K/RPABC4 and POLR2L/RPABC5; a mobile stalk composed of two subunits POLR3H/RPC8 and CRCP/RPC9, protruding from the core and functioning primarily in transcription initiation; and additional subunits homologous to general transcription factors of the RNA polymerase II machinery, POLR3C/RPC3-POLR3F/RPC6-POLR3G/RPC7 heterotrimer required for transcription initiation and POLR3D/RPC4-POLR3E/RPC5 heterodimer involved in both transcription initiation and termination. Interacts with CRCP/RPC9. POLR3H/RPC8 and CRCP/RPC9 probably form a Pol III subcomplex.

The protein resides in the nucleus. Its function is as follows. DNA-dependent RNA polymerase catalyzes the transcription of DNA into RNA using the four ribonucleoside triphosphates as substrates. Specific peripheric component of RNA polymerase III (Pol III) which synthesizes small non-coding RNAs including 5S rRNA, snRNAs, tRNAs and miRNAs from at least 500 distinct genomic loci. With CRCP/RPC9 forms a mobile stalk that protrudes from Pol III core and functions primarily in transcription initiation. Pol III plays a key role in sensing and limiting infection by intracellular bacteria and DNA viruses. Acts as nuclear and cytosolic DNA sensor involved in innate immune response. Can sense non-self dsDNA that serves as template for transcription into dsRNA. The non-self RNA polymerase III transcripts, such as Epstein-Barr virus-encoded RNAs (EBERs) induce type I interferon and NF-kappa-B through the RIG-I pathway. This chain is DNA-directed RNA polymerase III subunit RPC8 (POLR3H), found in Bos taurus (Bovine).